The primary structure comprises 80 residues: Acyl carrier protein (80 aa).

The region spanning 4 to 79 is the Carrier domain; it reads EAILEKVRSI…DAVKYIEDKQ (76 aa). Ser39 is modified (O-(pantetheine 4'-phosphoryl)serine).

Belongs to the acyl carrier protein (ACP) family. Post-translationally, 4'-phosphopantetheine is transferred from CoA to a specific serine of apo-ACP by AcpS. This modification is essential for activity because fatty acids are bound in thioester linkage to the sulfhydryl of the prosthetic group.

It localises to the cytoplasm. It functions in the pathway lipid metabolism; fatty acid biosynthesis. Its function is as follows. Carrier of the growing fatty acid chain in fatty acid biosynthesis. This is Acyl carrier protein from Synechococcus sp. (strain CC9902).